The chain runs to 305 residues: Ornithine carbamoyltransferase (305 aa).

Residues 52-55 (STRT), glutamine 79, arginine 103, and 130-133 (HPCQ) each bind carbamoyl phosphate. L-ornithine-binding positions include asparagine 161, aspartate 222, and 226 to 227 (SM). Carbamoyl phosphate-binding positions include 262–263 (CL) and arginine 290.

It belongs to the aspartate/ornithine carbamoyltransferase superfamily. OTCase family.

It is found in the cytoplasm. The enzyme catalyses carbamoyl phosphate + L-ornithine = L-citrulline + phosphate + H(+). Its pathway is amino-acid biosynthesis; L-arginine biosynthesis; L-arginine from L-ornithine and carbamoyl phosphate: step 1/3. In terms of biological role, reversibly catalyzes the transfer of the carbamoyl group from carbamoyl phosphate (CP) to the N(epsilon) atom of ornithine (ORN) to produce L-citrulline. The protein is Ornithine carbamoyltransferase of Pelobacter propionicus (strain DSM 2379 / NBRC 103807 / OttBd1).